The primary structure comprises 205 residues: Small ribosomal subunit protein uS4 (205 aa).

In terms of domain architecture, S4 RNA-binding spans 110-172 (RRLQTIIYRK…VGSPITKEKL (63 aa)). A disordered region spans residues 173–205 (MAKPQPASAPKAAAAPKAAAAPAEAAAAPKKEE). The span at 174 to 205 (AKPQPASAPKAAAAPKAAAAPAEAAAAPKKEE) shows a compositional bias: low complexity.

The protein belongs to the universal ribosomal protein uS4 family. Part of the 30S ribosomal subunit. Contacts protein S5. The interaction surface between S4 and S5 is involved in control of translational fidelity.

Functionally, one of the primary rRNA binding proteins, it binds directly to 16S rRNA where it nucleates assembly of the body of the 30S subunit. With S5 and S12 plays an important role in translational accuracy. The polypeptide is Small ribosomal subunit protein uS4 (Methanocella arvoryzae (strain DSM 22066 / NBRC 105507 / MRE50)).